Reading from the N-terminus, the 227-residue chain is Orotidine 5'-phosphate decarboxylase (227 aa).

Residues aspartate 8, lysine 30, 59–68 (DLKLYDIPYT), threonine 118, arginine 178, glutamine 187, glycine 207, and arginine 208 each bind substrate. Lysine 61 acts as the Proton donor in catalysis.

Belongs to the OMP decarboxylase family. Type 1 subfamily. In terms of assembly, homodimer.

It carries out the reaction orotidine 5'-phosphate + H(+) = UMP + CO2. The protein operates within pyrimidine metabolism; UMP biosynthesis via de novo pathway; UMP from orotate: step 2/2. Functionally, catalyzes the decarboxylation of orotidine 5'-monophosphate (OMP) to uridine 5'-monophosphate (UMP). This chain is Orotidine 5'-phosphate decarboxylase, found in Helicobacter pylori (strain J99 / ATCC 700824) (Campylobacter pylori J99).